The following is a 163-amino-acid chain: uncharacterized protein (163 aa).

A helical membrane pass occupies residues 7–23 (TLVAFIATFFNLAATSI).

It is found in the membrane. This is an uncharacterized protein from Saccharomyces cerevisiae (strain ATCC 204508 / S288c) (Baker's yeast).